Reading from the N-terminus, the 2005-residue chain is Sodium channel protein type 2 subunit alpha (2005 aa).

At 1-129 (MARSVLVPPG…KLAIKILVHS (129 aa)) the chain is on the cytoplasmic side. A Phosphoserine modification is found at Ser-4. A disordered region spans residues 28–61 (RIAEEKAKRPKQERKDEDDENGPKPNSDLEAGKS). A Glycyl lysine isopeptide (Lys-Gly) (interchain with G-Cter in SUMO1) cross-link involves residue Lys-38. The stretch at 111 to 456 (ILTPFNPIRK…QQMLEQLKKQ (346 aa)) is one I repeat. A helical transmembrane segment spans residues 130-148 (LFNVLIMCTILTNCVFMTM). The Extracellular portion of the chain corresponds to 149 to 155 (SNPPDWT). The helical transmembrane segment at 156 to 176 (KNVEYTFTGIYTFESLIKILA) threads the bilayer. Over 177-190 (RGFCLEDFTFLRNP) the chain is Cytoplasmic. A helical transmembrane segment spans residues 191 to 208 (WNWLDFTVITFAYVTEFV). Residues 209–214 (NLGNVS) are Extracellular-facing. N-linked (GlcNAc...) asparagine glycosylation occurs at Asn-212. A helical membrane pass occupies residues 215–231 (ALRTFRVLRALKTISVI). Residues 232 to 250 (PGLKTIVGALIQSVKKLSD) lie on the Cytoplasmic side of the membrane. Residues 251–270 (VMILTVFCLSVFALIGLQLF) form a helical membrane-spanning segment. At 271-369 (MGNLRNKCLQ…PNYGYTSFDT (99 aa)) the chain is on the extracellular side. Cys-278 and Cys-338 are disulfide-bonded. Asn-285, Asn-291, Asn-297, Asn-303, Asn-308, and Asn-340 each carry an N-linked (GlcNAc...) asparagine glycan. Residues 370-394 (FSWAFLSLFRLMTQDFWENLYQLTL) constitute an intramembrane region (pore-forming). At 395 to 401 (RAAGKTY) the chain is on the extracellular side. Residues 402–422 (MIFFVLVIFLGSFYLINLILA) form a helical membrane-spanning segment. Over 423–759 (VVAMAYEEQN…HVVNLVVMDP (337 aa)) the chain is Cytoplasmic. Phosphoserine occurs at positions 468, 471, 484, 526, 528, 531, 553, 554, and 558. The interval 494–529 (SSKSEKELKNRRKKKKQKEQAGEEEKEDAVRKSASE) is disordered. Residues 511-529 (KEQAGEEEKEDAVRKSASE) show a composition bias toward basic and acidic residues. The residue at position 554 (Ser-554) is a Phosphoserine; by PKC; in vitro. Ser-573 and Ser-576 each carry phosphoserine; by PKC; in vitro. Ser-589, Ser-610, Ser-623, Ser-687, Ser-688, and Ser-721 each carry phosphoserine. A disordered region spans residues 591–634 (NDFADDEHSTFEDNDSRRDSLFVPHRHGERRPSNVSQASRASRG). Basic and acidic residues predominate over residues 596–610 (DEHSTFEDNDSRRDS). One copy of the II repeat lies at 741 to 1013 (CCKPWLKVKH…QIAVGRMQKG (273 aa)). The helical transmembrane segment at 760–778 (FVDLAITICIVLNTLFMAM) threads the bilayer. At 779-789 (EHYPMTEQFSS) the chain is on the extracellular side. A helical transmembrane segment spans residues 790 to 809 (VLSVGNLVFTGIFTAEMFLK). The Cytoplasmic segment spans residues 810 to 823 (IIAMDPYYYFQEGW). Residues 824–843 (NIFDGFIVSLSLMELGLANV) form a helical membrane-spanning segment. At 844-845 (EG) the chain is on the extracellular side. The chain crosses the membrane as a helical span at residues 846-863 (LSVLRSFRLLRVFKLAKS). Topologically, residues 864-879 (WPTLNMLIKIIGNSVG) are cytoplasmic. The chain crosses the membrane as a helical span at residues 880–898 (ALGNLTLVLAIIVFIFAVV). The Extracellular portion of the chain corresponds to 899-927 (GMQLFGKSYKECVCKISNDCELPRWHMHH). A disulfide bridge links Cys-912 with Cys-918. Positions 917–918 (DC) are binds SCN2B. An intramembrane region (pore-forming) is located at residues 928–948 (FFHSFLIVFRVLCGEWIETMW). The Extracellular segment spans residues 949-961 (DCMEVAGQTMCLT). Cysteines 950 and 959 form a disulfide. Residues 962 to 982 (VFMMVMVIGNLVVLNLFLALL) form a helical membrane-spanning segment. The Cytoplasmic portion of the chain corresponds to 983-1209 (LSSFSSDNLA…TCYKIVEHNW (227 aa)). The tract at residues 1120–1166 (EEFSSESDMEESKEKLNATSSSEGSTVDIGAPAEGEQPEAEPEESLE) is disordered. Over residues 1155–1166 (EQPEAEPEESLE) the composition is skewed to acidic residues. Residues 1190-1504 (KGKLWWNLRK…KKYYNAMKKL (315 aa)) form an III repeat. A helical membrane pass occupies residues 1210 to 1227 (FETFIVFMILLSSGALAF). Topologically, residues 1228–1240 (EDIYIEQRKTIKT) are extracellular. A helical membrane pass occupies residues 1241-1259 (MLEYADKVFTYIFILEMLL). The Cytoplasmic portion of the chain corresponds to 1260 to 1273 (KWVAYGFQMYFTNA). The chain crosses the membrane as a helical span at residues 1274–1292 (WCWLDFLIVDVSLVSLTAN). Residues 1293–1300 (ALGYSELG) lie on the Extracellular side of the membrane. The helical transmembrane segment at 1301-1319 (AIKSLRTLRALRPLRALSR) threads the bilayer. The Cytoplasmic segment spans residues 1320-1336 (FEGMRVVVNALLGAIPS). The helical transmembrane segment at 1337–1356 (IMNVLLVCLIFWLIFSIMGV) threads the bilayer. The Extracellular portion of the chain corresponds to 1357-1408 (NLFAGKFYHCINYTTGEMFDVSVVNNYSECQALIESNQTARWKNVKVNFDNV). A disulfide bond links Cys-1366 and Cys-1386. N-linked (GlcNAc...) asparagine glycans are attached at residues Asn-1368, Asn-1382, and Asn-1393. Positions 1409-1430 (GLGYLSLLQVATFKGWMDIMYA) form an intramembrane region, pore-forming. Topologically, residues 1431-1447 (AVDSRNVELQPKYEDNL) are extracellular. The helical transmembrane segment at 1448-1469 (YMYLYFVIFIIFGSFFTLNLFI) threads the bilayer. The Cytoplasmic portion of the chain corresponds to 1470-1532 (GVIIDNFNQQ…MVFDFVTKQV (63 aa)). Phosphoserine; by PKC is present on Ser-1506. An IV repeat occupies 1513-1811 (IPRPANKFQG…WEKFDPDATQ (299 aa)). The chain crosses the membrane as a helical span at residues 1533 to 1550 (FDISIMILICLNMVTMMV). Residues 1551 to 1561 (ETDDQSQEMTN) lie on the Extracellular side of the membrane. The chain crosses the membrane as a helical span at residues 1562 to 1580 (ILYWINLVFIVLFTGECVL). Residues 1581-1592 (KLISLRHYYFTI) are Cytoplasmic-facing. The helical transmembrane segment at 1593 to 1610 (GWNIFDFVVVILSIVGMF) threads the bilayer. Residues 1611–1623 (LAELIEKYFVSPT) are Extracellular-facing. Residues 1624–1640 (LFRVIRLARIGRILRLI) traverse the membrane as a helical segment. At 1641 to 1659 (KGAKGIRTLLFALMMSLPA) the chain is on the cytoplasmic side. Residues 1660 to 1677 (LFNIGLLLFLVMFIYAIF) traverse the membrane as a helical segment. Residues 1678-1699 (GMSNFAYVKREVGIDDMFNFET) lie on the Extracellular side of the membrane. The segment at residues 1700 to 1722 (FGNSMICLFQITTSAGWDGLLAP) is an intramembrane region (pore-forming). The Extracellular segment spans residues 1723–1752 (ILNSGPPDCDPEKDHPGSSVKGDCGNPSVG). A disulfide bridge connects residues Cys-1731 and Cys-1746. A helical membrane pass occupies residues 1753 to 1775 (IFFFVSYIIISFLVVVNMYIAVI). Residues 1776 to 2005 (LENFSVATEE…KGKDIRESKK (230 aa)) lie on the Cytoplasmic side of the membrane. Residues 1905–1934 (EEVSAIVIQRAYRRYLLKQKVKKVSSIYKK) form the IQ domain. Residue Ser-1930 is modified to Phosphoserine. A compositionally biased stretch (basic and acidic residues) spans 1933-1964 (KKDKGKEDEGTPIKEDIITDKLNENSTPEKTD). The segment at 1933–2005 (KKDKGKEDEG…KGKDIRESKK (73 aa)) is disordered. A phosphothreonine mark is found at Thr-1943, Thr-1963, and Thr-1966. Ser-1971 bears the Phosphoserine mark. Residues 1979 to 2005 (TKPEKEKFEKDKSEKEDKGKDIRESKK) are compositionally biased toward basic and acidic residues.

Belongs to the sodium channel (TC 1.A.1.10) family. Nav1.2/SCN2A subfamily. Heterooligomer of a large alpha subunit and a smaller beta subunit. Heterooligomer with SCN2B or SCN4B; disulfide-linked. Heterooligomer with SCN1B or SCN3B; non-covalently linked. Interacts with NEDD4L. Interacts with CALM. Interacts with TMEM233. Interacts with the conotoxin GVIIJ. Interacts with the scorpion toxin BMK M1. May be ubiquitinated by NEDD4L; which would promote its endocytosis. In terms of processing, phosphorylation at Ser-1506 by PKC in a highly conserved cytoplasmic loop slows inactivation of the sodium channel and reduces peak sodium currents. Post-translationally, sumoylated at Lys-38. Sumoylation is induced by hypoxia, increases voltage-gated sodium current and mediates the early response to acute hypoxia in neurons. Sumoylated SCN2A is located at the cell membrane. In terms of tissue distribution, expressed in brain (at protein level). Expressed in cerebellar granule neurons (at protein level).

It is found in the cell membrane. It carries out the reaction Na(+)(in) = Na(+)(out). Mediates the voltage-dependent sodium ion permeability of excitable membranes. Assuming opened or closed conformations in response to the voltage difference across the membrane, the protein forms a sodium-selective channel through which Na(+) ions may pass in accordance with their electrochemical gradient. Implicated in the regulation of hippocampal replay occurring within sharp wave ripples (SPW-R) important for memory. The protein is Sodium channel protein type 2 subunit alpha of Rattus norvegicus (Rat).